Here is a 441-residue protein sequence, read N- to C-terminus: Polycomb protein EED (441 aa).

A disordered region spans residues methionine 1–lysine 72. Serine 2 is modified (N-acetylserine). Serine 2 and serine 34 each carry phosphoserine. The span at glutamate 45–asparagine 61 shows a compositional bias: polar residues. The residue at position 55 (threonine 55) is a Phosphothreonine. N6,N6,N6-trimethyllysine; alternate is present on lysine 66. N6,N6-dimethyllysine; alternate is present on lysine 66. Lysine 66 carries the N6-methyllysine; alternate modification. The interaction with EZH2 stretch occupies residues serine 81–arginine 441. WD repeat units follow at residues aspartate 91–leucine 134, aspartate 142–histidine 185, glycine 188–isoleucine 228, and glycine 234–lysine 275. 2 required for interaction with the matrix protein MA of HIV-1 regions span residues threonine 149 to aspartate 303 and threonine 301 to arginine 441. An N6,N6,N6-trimethyllysine; alternate mark is found at lysine 197, lysine 268, and lysine 284. An N6,N6-dimethyllysine; alternate mark is found at lysine 197, lysine 268, and lysine 284. N6-methyllysine; alternate is present on residues lysine 197, lysine 268, and lysine 284. WD repeat units follow at residues isoleucine 304 to aspartate 341, serine 359 to alanine 399, and lysine 408 to arginine 441.

The protein belongs to the WD repeat ESC family. Component of the PRC2/EED-EZH2 complex, which includes EED, EZH2, SUZ12, RBBP4 and RBBP7 and possibly AEBP2. The minimum components required for methyltransferase activity of the PRC2/EED-EZH2 complex are EED, EZH2 and SUZ12. Component of the PRC2/EED-EZH1 complex, which includes EED, EZH1, SUZ12, RBBP4 and AEBP2. The PRC2 complex may also interact with DNMT1, DNMT3A, DNMT3B and PHF1 via the EZH2 subunit and with SIRT1 via the SUZ12 subunit. Interacts with HDAC, HDAC2, histone H1 and YY1. May interact with ITGA4, ITGAE and ITGB7. Interacts with CDYL. Interacts with BMAL1. Interacts with KMT2A/MLL1. In terms of assembly, (Microbial infection) May interact with the MA protein of HIV-1. Post-translationally, methylated. Binding to histone H1 'Lys-26' promotes mono-, di-, and trimethylation of internal lysines. In terms of tissue distribution, expressed in brain, colon, heart, kidney, liver, lung, muscle, ovary, peripheral blood leukocytes, pancreas, placenta, prostate, spleen, small intestine, testis, thymus and uterus. Appears to be overexpressed in breast and colon cancer.

Its subcellular location is the nucleus. The protein localises to the chromosome. In terms of biological role, polycomb group (PcG) protein. Component of the PRC2/EED-EZH2 complex, which methylates 'Lys-9' and 'Lys-27' of histone H3, leading to transcriptional repression of the affected target gene. Also recognizes 'Lys-26' trimethylated histone H1 with the effect of inhibiting PRC2 complex methyltransferase activity on nucleosomal histone H3 'Lys-27', whereas H3 'Lys-27' recognition has the opposite effect, enabling the propagation of this repressive mark. The PRC2/EED-EZH2 complex may also serve as a recruiting platform for DNA methyltransferases, thereby linking two epigenetic repression systems. Genes repressed by the PRC2/EED-EZH2 complex include HOXC8, HOXA9, MYT1 and CDKN2A. This is Polycomb protein EED from Homo sapiens (Human).